An 841-amino-acid chain; its full sequence is Beta-adaptin-like protein A (841 aa).

Disordered stretches follow at residues 1 to 25 (MAPPAASQRYPSPSQPSGKSEVSDL) and 650 to 671 (DENKGVSNNNGSAYTAPSLESS). 2 stretches are compositionally biased toward polar residues: residues 9–25 (RYPSPSQPSGKSEVSDL) and 654–671 (GVSNNNGSAYTAPSLESS).

Belongs to the adaptor complexes large subunit family. Adaptor protein complexes are heterotetramers composed of two large adaptins (beta-type subunit and alpha-type or delta-type or epsilon-type or gamma-type subunit), a medium adaptin (mu-type subunit) and a small adaptin (sigma-type subunit). Interacts with AHK2.

It is found in the golgi apparatus. The protein localises to the trans-Golgi network. Its subcellular location is the cytoplasmic vesicle. It localises to the clathrin-coated vesicle membrane. Functionally, subunit of clathrin-associated adaptor protein complex that plays a role in protein sorting in the late-Golgi/trans-Golgi network (TGN) and/or endosomes. The AP complexes mediate both the recruitment of clathrin to membranes and the recognition of sorting signals within the cytosolic tails of transmembrane cargo molecules. This Arabidopsis thaliana (Mouse-ear cress) protein is Beta-adaptin-like protein A (BETAA-AD).